Consider the following 266-residue polypeptide: L-aspartate dehydrogenase (266 aa).

NAD(+)-binding residues include alanine 123 and asparagine 189. Residue histidine 219 is part of the active site.

This sequence belongs to the L-aspartate dehydrogenase family.

It catalyses the reaction L-aspartate + NADP(+) + H2O = oxaloacetate + NH4(+) + NADPH + H(+). The catalysed reaction is L-aspartate + NAD(+) + H2O = oxaloacetate + NH4(+) + NADH + H(+). It participates in cofactor biosynthesis; NAD(+) biosynthesis; iminoaspartate from L-aspartate (dehydrogenase route): step 1/1. In terms of biological role, specifically catalyzes the NAD or NADP-dependent dehydrogenation of L-aspartate to iminoaspartate. The sequence is that of L-aspartate dehydrogenase from Cupriavidus taiwanensis (strain DSM 17343 / BCRC 17206 / CCUG 44338 / CIP 107171 / LMG 19424 / R1) (Ralstonia taiwanensis (strain LMG 19424)).